The following is a 785-amino-acid chain: Toll-like receptor 2 (785 aa).

An N-terminal signal peptide occupies residues 1 to 17 (MSRVLWTLWVLGAVTNL). The Extracellular segment spans residues 18–589 (SKEEAPDQSS…RLSVSECHRT (572 aa)). A disulfide bridge connects residues Cys31 and Cys37. LRR repeat units follow at residues 54–77 (AVRSLDLSNNEITYIGNSDLRDCV), 78–101 (NLKALRLESNGINTIEEESFLSLW), 102–125 (SLEHLDLSYNLLSNLSSSWFRPLS), 126–150 (SLKFLNLLGNPYKSLGETPLFSQLT), 151–175 (NLRILKVGNIYSFTEIQDKDFAGLT), 176–199 (FLEELEIDASNLQRYEPKSLKSIQ), 200–223 (NISYLALRMKQPVLLVEIFVDLSS), 224–250 (SLKHLELRDTHLDTFHFSEASINETHT), 251–278 (LVKKWTFRNVKVTDRSFTGVVRLLNYVS), 279–308 (GVLEVEFEDCTLYGLGDFDIPDVDKIKNIG), 309–337 (QIETLTVRRLHIPHFYSFYDMSSIYSLTE), 338–361 (DVKRITVENSKVFLVPCLLSQHLK), 362–388 (SLEYLDLSENLMVEEYLKNSACEDAWP), 389–414 (SLQTLVLRQNHLASLERTGETLLTLK), 415–437 (NLTNIDISKNSFHSMPETCQWPE), 438–457 (KMKYLNLSSTRIHSVTGCIP), 458–478 (KTLEILDVSNNNLNLFSLNLP), 479–500 (QLKELYISRNKLMTLPDASLLP), and 501–524 (MLLVLKISRNAITTFSKEQLDSFH). An N-linked (GlcNAc...) asparagine glycan is attached at Asn115. N-linked (GlcNAc...) asparagine glycans are attached at residues Asn200 and Asn246. A disulfide bridge links Cys354 with Cys383. Asn415 and Asn443 each carry an N-linked (GlcNAc...) asparagine glycan. Cys433 and Cys455 form a disulfide bridge. In terms of domain architecture, LRRCT spans 525-579 (TLKTLEAGGNNFICSCEFLSFTQEQQALAKVLIDWPANYLCDSPSHVRGQQVQDV). A helical transmembrane segment spans residues 590–610 (ALVSGMCCALFLLILLTEVLC). At 611 to 785 (HRFHGLWYMR…WLNLRTAIKS (175 aa)) the chain is on the cytoplasmic side. Positions 640–783 (VCYDAFVSYS…GFWLNLRTAI (144 aa)) constitute a TIR domain. A Glycyl lysine isopeptide (Lys-Gly) (interchain with G-Cter in ubiquitin) cross-link involves residue Lys755. The short motif at 762–779 (YLEWPTDDAQQEGFWLNL) is the ATG16L1-binding motif element.

Belongs to the Toll-like receptor family. As to quaternary structure, interacts with LY96, TLR1 and TLR6 (via extracellular domain). TLR2 seems to exist in heterodimers with either TLR1 or TLR6 before stimulation by the ligand. The heterodimers form bigger oligomers in response to their corresponding ligands as well as further heterotypic associations with other receptors such as CD14 and/or CD36. Binds MYD88 (via TIR domain). Interacts with TICAM1. Interacts with CNPY3. Interacts with ATG16L1. Interacts with PPP1R11. Interacts with TICAM2. Interacts with TIRAP. Ubiquitinated at Lys-755 by PPP1R11, leading to its degradation. Deubiquitinated by USP2. Post-translationally, glycosylation of Asn-443 is critical for secretion of the N-terminal ectodomain of TLR2.

Its subcellular location is the membrane. It is found in the cytoplasmic vesicle. The protein localises to the phagosome membrane. It localises to the membrane raft. In terms of biological role, cooperates with LY96 to mediate the innate immune response to bacterial lipoproteins and other microbial cell wall components. Cooperates with TLR1 or TLR6 to mediate the innate immune response to bacterial lipoproteins or lipopeptides. Acts via MYD88 and TRAF6, leading to NF-kappa-B activation, cytokine secretion and the inflammatory response. May also promote apoptosis in response to lipoproteins. Forms activation clusters composed of several receptors depending on the ligand, these clusters trigger signaling from the cell surface and subsequently are targeted to the Golgi in a lipid-raft dependent pathway. Forms the cluster TLR2:TLR6:CD14:CD36 in response to diacylated lipopeptides and TLR2:TLR1:CD14 in response to triacylated lipopeptides. The polypeptide is Toll-like receptor 2 (TLR2) (Canis lupus familiaris (Dog)).